The following is a 291-amino-acid chain: Trimeric intracellular cation channel type B (291 aa).

At 1–15 (MESPWNELTLAFSRT) the chain is on the lumenal side. Residues 16–33 (SMFPFFDIAHYLVSVMAL) form a helical membrane-spanning segment. Residues 34–47 (KHQPGAAALAWKNP) lie on the Cytoplasmic side of the membrane. Residues 48–69 (LSSWFTAMLHCFGGGILSCVLL) form a helical membrane-spanning segment. The Lumenal portion of the chain corresponds to 70 to 80 (AEPPLRFLANN). The helical transmembrane segment at 81–100 (TNILLASSIWYIAFFCPCDL) threads the bilayer. Topologically, residues 101 to 103 (ISQ) are cytoplasmic. Residues 104–122 (AYSFLPVQLLAAGMKEVTR) traverse the membrane as a helical segment. Residues Lys118 and Arg122 each coordinate a 1,2-diacyl-sn-glycero-3-phospho-(1D-myo-inositol-4,5-bisphosphate). Over 123–138 (TWKIVGGVTHANSYYK) the chain is Lumenal. A helical membrane pass occupies residues 139-156 (NGWIVMIAVGWARGAGGS). The Cytoplasmic segment spans residues 157–179 (IITNFEQLVKGCWKPEAEEWLKM). Residues 180 to 196 (SYPAKVTLLGSVIFTFQ) form a helical membrane-spanning segment. At 197–207 (QTKYLAISKHN) the chain is on the lumenal side. The helical transmembrane segment at 208-225 (LMFLFTVFLVATKITMMI) threads the bilayer. Topologically, residues 226–291 (TKTALVPFAC…VKKKHSKKTE (66 aa)) are cytoplasmic. The segment at 257–291 (KSETKSSFNGTGSSTSKPVANASDKVKKKHSKKTE) is disordered. Polar residues predominate over residues 261–274 (KSSFNGTGSSTSKP). Ser262 is subject to Phosphoserine. The segment covering 282–291 (VKKKHSKKTE) has biased composition (basic residues).

The protein belongs to the TMEM38 family. Homotrimer; conformation seems to be controled by binding to diacylglycerol (DAG).

Its subcellular location is the endoplasmic reticulum membrane. It catalyses the reaction K(+)(in) = K(+)(out). With respect to regulation, channel activity is activated by increased cytosolic Ca(2+) levels and blocked by luminal high Ca(2+) levels. In terms of biological role, intracellular monovalent cation channel required for maintenance of rapid intracellular calcium release. Acts as a potassium counter-ion channel that functions in synchronization with calcium release from intracellular stores. Activated by increased cytosolic Ca(2+) levels. This Bos taurus (Bovine) protein is Trimeric intracellular cation channel type B (TMEM38B).